The sequence spans 752 residues: Palmitoyltransferase AKR1 (752 aa).

2 disordered regions span residues 1–21 (MTAE…KSDY) and 49–68 (ASSE…LGSV). At 1–318 (MTAEEVDKES…FPLPQYFSAS (318 aa)) the chain is on the cytoplasmic side. 2 stretches are compositionally biased toward basic and acidic residues: residues 9–21 (ESDP…KSDY) and 51–68 (SELK…LGSV). 6 ANK repeats span residues 72–102 (PILE…DLSN), 108–137 (ERVS…EVNF), 142–171 (LDAT…DPNI), 175–208 (QGYN…DVDQ), 212–241 (HQRT…DVKN), and 245–274 (AGFT…DFFQ). Residues 319–339 (TGKMLTFFLPWVLIPLVFYIF) form a helical membrane-spanning segment. Over 340–341 (SK) the chain is Lumenal. The chain crosses the membrane as a helical span at residues 342–362 (ITFFIALLINTIVLVISGLVL). The Cytoplasmic portion of the chain corresponds to 363 to 380 (SRLVVPSYLLSKRHPILN). The chain crosses the membrane as a helical span at residues 381–401 (SPLLAGILSGTIAIAFFIWFT). Over 402–412 (KISILTFTEKP) the chain is Lumenal. Residues 413 to 433 (VGNIIMLGFFIGLITLFIGLM) form a helical membrane-spanning segment. At 434 to 509 (KSDPGYIPGT…YNQIGLLNHK (76 aa)) the chain is on the cytoplasmic side. Residues 466–516 (HFCVHTWIRIPLRSKYDRDSACLISAFDHFCPWVYNQIGLLNHKLFYMFVV) form the DHHC domain. Cys496 functions as the S-palmitoyl cysteine intermediate in the catalytic mechanism. The chain crosses the membrane as a helical span at residues 510-530 (LFYMFVVLLEISVWWFLPLMM). Topologically, residues 531-567 (EYFDELEDYLENRKGKHFGDCHFLGDEDLCFGLHHDT) are lumenal. Residues 568 to 588 (FNFLLLCWVIFQAFWVLCLIA) traverse the membrane as a helical segment. Over 589 to 752 (VQTVQMLKGV…TLPNATEELV (164 aa)) the chain is Cytoplasmic.

It belongs to the DHHC palmitoyltransferase family. AKR/ZDHHC17 subfamily.

The protein resides in the early endosome membrane. The protein localises to the golgi apparatus membrane. The enzyme catalyses L-cysteinyl-[protein] + hexadecanoyl-CoA = S-hexadecanoyl-L-cysteinyl-[protein] + CoA. In terms of biological role, palmitoyltransferase specific for casein kinase 1. This chain is Palmitoyltransferase AKR1 (AKR1), found in Kluyveromyces lactis (strain ATCC 8585 / CBS 2359 / DSM 70799 / NBRC 1267 / NRRL Y-1140 / WM37) (Yeast).